Reading from the N-terminus, the 143-residue chain is Transcriptional regulator MraZ (143 aa).

SpoVT-AbrB domains follow at residues 5–47 (THSP…PIRE) and 76–119 (ASNE…DAQT).

This sequence belongs to the MraZ family. As to quaternary structure, forms oligomers.

The protein localises to the cytoplasm. Its subcellular location is the nucleoid. This chain is Transcriptional regulator MraZ, found in Thermobifida fusca (strain YX).